The chain runs to 133 residues: Probable 4-amino-4-deoxy-L-arabinose-phosphoundecaprenol flippase subunit ArnF (133 aa).

Topologically, residues 1-5 are cytoplasmic; the sequence is MKTGY. The chain crosses the membrane as a helical span at residues 6–26; that stretch reads LWAIASALLVTVAQLLLKIGM. Topologically, residues 27-47 are periplasmic; it reads SELPDLQLEKQWFDLHWLWAN. Residues 48–68 form a helical membrane-spanning segment; the sequence is IIPISVVFVGLIGYVLSMVCW. An EamA domain is found at 51–125; sequence ISVVFVGLIG…IMLGVWLISQ (75 aa). The Cytoplasmic segment spans residues 69 to 80; sequence LLTLRTIPLNKA. Residues 81–101 form a helical membrane-spanning segment; the sequence is YPLISLSYVFVYILAVVLPWF. Over 102–103 the chain is Periplasmic; it reads QE. Residues 104-124 form a helical membrane-spanning segment; it reads TLSWSKTIGIIFIMLGVWLIS. Topologically, residues 125–133 are cytoplasmic; it reads QKTEQTTSH.

It belongs to the ArnF family. Heterodimer of ArnE and ArnF.

Its subcellular location is the cell inner membrane. The protein operates within bacterial outer membrane biogenesis; lipopolysaccharide biosynthesis. In terms of biological role, translocates 4-amino-4-deoxy-L-arabinose-phosphoundecaprenol (alpha-L-Ara4N-phosphoundecaprenol) from the cytoplasmic to the periplasmic side of the inner membrane. The chain is Probable 4-amino-4-deoxy-L-arabinose-phosphoundecaprenol flippase subunit ArnF from Proteus mirabilis (strain HI4320).